A 155-amino-acid chain; its full sequence is Aspartate carbamoyltransferase regulatory chain (155 aa).

C109, C114, C138, and C141 together coordinate Zn(2+).

It belongs to the PyrI family. Contains catalytic and regulatory chains. It depends on Zn(2+) as a cofactor.

Functionally, involved in allosteric regulation of aspartate carbamoyltransferase. The chain is Aspartate carbamoyltransferase regulatory chain from Vibrio cholerae serotype O1 (strain ATCC 39315 / El Tor Inaba N16961).